The sequence spans 379 residues: Lipoyl synthase, mitochondrial (379 aa).

[4Fe-4S] cluster is bound by residues Cys106, Cys111, Cys117, Cys137, Cys141, Cys144, and Ser352. In terms of domain architecture, Radical SAM core spans 122–341; sequence EHGTQTATIM…EERGNALGFL (220 aa).

It belongs to the radical SAM superfamily. Lipoyl synthase family. It depends on [4Fe-4S] cluster as a cofactor.

It is found in the mitochondrion. It catalyses the reaction [[Fe-S] cluster scaffold protein carrying a second [4Fe-4S](2+) cluster] + N(6)-octanoyl-L-lysyl-[protein] + 2 oxidized [2Fe-2S]-[ferredoxin] + 2 S-adenosyl-L-methionine + 4 H(+) = [[Fe-S] cluster scaffold protein] + N(6)-[(R)-dihydrolipoyl]-L-lysyl-[protein] + 4 Fe(3+) + 2 hydrogen sulfide + 2 5'-deoxyadenosine + 2 L-methionine + 2 reduced [2Fe-2S]-[ferredoxin]. It functions in the pathway protein modification; protein lipoylation via endogenous pathway; protein N(6)-(lipoyl)lysine from octanoyl-[acyl-carrier-protein]: step 2/2. In terms of biological role, catalyzes the radical-mediated insertion of two sulfur atoms into the C-6 and C-8 positions of the octanoyl moiety bound to the lipoyl domains of lipoate-dependent enzymes, thereby converting the octanoylated domains into lipoylated derivatives. The polypeptide is Lipoyl synthase, mitochondrial (Drosophila erecta (Fruit fly)).